Consider the following 298-residue polypeptide: Mitochondrial glycine transporter (298 aa).

Solcar repeat units lie at residues 5 to 84, 105 to 189, and 211 to 295; these read TKTR…MRTA, LTTY…AKEV, and TSTL…LIKL. 6 helical membrane passes run 11 to 36, 59 to 85, 111 to 136, 164 to 187, 215 to 241, and 270 to 288; these read LIGG…TRIQ, GTLP…RTAI, LISG…VRYE, GFGP…EKAK, VNST…KTRM, and GLSM…AWGI.

The protein belongs to the mitochondrial carrier (TC 2.A.29) family. SLC25A38 subfamily.

It is found in the mitochondrion inner membrane. It catalyses the reaction glycine(in) = glycine(out). Functionally, mitochondrial glycine transporter that imports glycine into the mitochondrial matrix. Plays an important role in providing glycine for the first enzymatic step in heme biosynthesis, the condensation of glycine with succinyl-CoA to produce 5-aminolevulinate (ALA) in the mitochondrial matrix. The protein is Mitochondrial glycine transporter of Vanderwaltozyma polyspora (strain ATCC 22028 / DSM 70294 / BCRC 21397 / CBS 2163 / NBRC 10782 / NRRL Y-8283 / UCD 57-17) (Kluyveromyces polysporus).